Consider the following 152-residue polypeptide: Putative toxin MJ1304 (152 aa).

In terms of domain architecture, HEPN spans Ile15–Val135.

Functionally, putative toxin component of a putative type VII toxin-antitoxin (TA) system. Its cognate antitoxin might be MJ1305. This Methanocaldococcus jannaschii (strain ATCC 43067 / DSM 2661 / JAL-1 / JCM 10045 / NBRC 100440) (Methanococcus jannaschii) protein is Putative toxin MJ1304.